We begin with the raw amino-acid sequence, 1249 residues long: LRR receptor-like serine/threonine-protein kinase GSO1 (1249 aa).

The signal sequence occupies residues 1-18 (MQPLVLLLLFILCFSGLG). The Extracellular segment spans residues 19-876 (QPGIINNDLQ…QQGLSARSVV (858 aa)). Residues Asn77 and Asn117 are each glycosylated (N-linked (GlcNAc...) asparagine). 31 LRR repeats span residues 94–118 (FDNL…LSNL), 119–142 (TSLE…LGSL), 144–166 (NIRS…LGNL), 168–190 (NLQM…LGRL), 191–214 (VRVQ…LGNC), 216–238 (DLTV…LGRL), 239–262 (ENLE…LGEM), 264–285 (QLQY…SLAD), 286–310 (LGNL…FWNM), 312–334 (QLLD…ICSN), 336–359 (TNLE…LSKC), 360–383 (QSLK…LFEL), 385–407 (ELTD…ISNL), 408–431 (TNLQ…ISAL), 433–455 (KLEV…IGNC), 457–479 (SLKM…IGRL), 480–503 (KELN…LGNC), 505–527 (QLNI…FGFL), 528–551 (KGLE…LISL), 553–574 (NLTR…LCGS), 576–598 (SYLS…LGNS), 599–622 (QNLD…LGKI), 623–646 (RELS…LVLC), 648–670 (KLTH…LGKL), 671–694 (SQLG…LFNC), 696–718 (KLLV…IGNL), 719–742 (GALN…MGKL), 744–766 (KLYE…IGQL), 767–791 (QDLQ…IGTL), 792–815 (SKLE…VGDM), and 817–838 (SLGY…QFSR). 3 N-linked (GlcNAc...) asparagine glycosylation sites follow: Asn213, Asn228, and Asn248. N-linked (GlcNAc...) asparagine glycans are attached at residues Asn298, Asn309, and Asn334. N-linked (GlcNAc...) asparagine glycans are attached at residues Asn369, Asn393, and Asn406. N-linked (GlcNAc...) asparagine glycosylation occurs at Asn454. Asn537, Asn553, Asn558, and Asn565 each carry an N-linked (GlcNAc...) asparagine glycan. N-linked (GlcNAc...) asparagine glycosylation is found at Asn693 and Asn708. N-linked (GlcNAc...) asparagine glycosylation occurs at Asn779. An N-linked (GlcNAc...) asparagine glycan is attached at Asn822. A helical transmembrane segment spans residues 877-897 (IISAISALTAIGLMILVIALF). At 898–1249 (FKQRHDFFKK…NNRTAGYKKL (352 aa)) the chain is on the cytoplasmic side. Thr948 is modified (phosphothreonine). The 290-residue stretch at 951–1240 (LSEEFMIGSG…ACDSLLHVYN (290 aa)) folds into the Protein kinase domain. ATP contacts are provided by residues 957–965 (IGSGGSGKV) and Lys979. 2 positions are modified to phosphotyrosine: Tyr1027 and Tyr1071. The active-site Proton acceptor is the Asp1084. Phosphotyrosine is present on residues Tyr1129 and Tyr1136.

It belongs to the protein kinase superfamily. Ser/Thr protein kinase family. Interacts with CIF1 and CIF2. Mostly expressed in siliques, seeds, developing embryos and seedlings, detected in flower buds and roots, but not in leaves or stems.

The protein localises to the cell membrane. The enzyme catalyses L-seryl-[protein] + ATP = O-phospho-L-seryl-[protein] + ADP + H(+). The catalysed reaction is L-threonyl-[protein] + ATP = O-phospho-L-threonyl-[protein] + ADP + H(+). In terms of biological role, together with GSO2, receptor-like serine/threonine-kinase required during the development of the epidermal surface in embryos and cotyledons. In coordination with GSO2, regulates root growth through control of cell division and cell fate specification. Controls seedling root growth by modulating sucrose response after germination. Receptor of the peptide hormones CIF1 and CIF2 required for contiguous Casparian strip diffusion barrier formation in roots. Required for localizing CASP proteins into the Casparian strip following an uninterrupted, ring-like domain, to trigger endodermal differentiation and thus regulate potassium ion (K) homeostasis. Involved in the maintenance of water transport and root pressure. May also be involved in the regulation of suberin accumulation in the endodermis. This is LRR receptor-like serine/threonine-protein kinase GSO1 from Arabidopsis thaliana (Mouse-ear cress).